The chain runs to 200 residues: MEEGRPRMGVIVPGNSSPVPALSAGRSTVEGYDPKLHDPFFDGVSQQLADKGFITAAADDLITWARTGSLMWMTFGLACCAVEMMQASMPRYDLERYGFAPRASPRQSDVMIVAGTLTNKMAPALRKVYDQMPEPRYVISMGSCANGGGYYYYSYSVVRGCDRVVPVDIYVPGCPPTAEALVYGVLQLQKKIRRTGTIER.

4 residues coordinate [4Fe-4S] cluster: C79, C80, C144, and C174.

It belongs to the complex I 20 kDa subunit family. In terms of assembly, NDH-1 is composed of 14 different subunits. Subunits NuoB, C, D, E, F, and G constitute the peripheral sector of the complex. [4Fe-4S] cluster is required as a cofactor.

It is found in the cell inner membrane. It catalyses the reaction a quinone + NADH + 5 H(+)(in) = a quinol + NAD(+) + 4 H(+)(out). Its function is as follows. NDH-1 shuttles electrons from NADH, via FMN and iron-sulfur (Fe-S) centers, to quinones in the respiratory chain. The immediate electron acceptor for the enzyme in this species is believed to be ubiquinone. Couples the redox reaction to proton translocation (for every two electrons transferred, four hydrogen ions are translocated across the cytoplasmic membrane), and thus conserves the redox energy in a proton gradient. This is NADH-quinone oxidoreductase subunit B from Caulobacter vibrioides (strain NA1000 / CB15N) (Caulobacter crescentus).